Here is a 205-residue protein sequence, read N- to C-terminus: Glycerol-3-phosphate acyltransferase (205 aa).

Residues 1 to 3 are Periplasmic-facing; sequence MSA. A helical transmembrane segment spans residues 4–24; sequence IAPGMILFAYLCGSISSAILV. Topologically, residues 25–52 are cytoplasmic; sequence CRLCGLPDPRTSGSGNPGATNVLRMGGK. The helical transmembrane segment at 53–73 threads the bilayer; sequence GAALAVLIFDVLKGMLPVWGA. At 74 to 80 the chain is on the periplasmic side; sequence YELGVSP. A helical transmembrane segment spans residues 81–101; it reads FWLGLIAIAACLGHIWPIFFG. Residues 102-111 lie on the Cytoplasmic side of the membrane; sequence FKGGKGVATA. A helical transmembrane segment spans residues 112–132; the sequence is FGAIAPIGWDLTGVMAGTWLL. The Periplasmic portion of the chain corresponds to 133-137; sequence TVLLS. Residues 138-158 traverse the membrane as a helical segment; that stretch reads GYSSLGAIVSALIAPFYVWWF. Topologically, residues 159-205 are cytoplasmic; it reads KPQFTFPVSMLSCLILLRHHDNIQRLWRRQETKIWTKLKRKREKDPE.

The protein belongs to the PlsY family. In terms of assembly, probably interacts with PlsX.

It is found in the cell inner membrane. It carries out the reaction sn-glycerol 3-phosphate + an acyl-CoA = a 1-acyl-sn-glycero-3-phosphate + CoA. The enzyme catalyses a fatty acyl-[ACP] + sn-glycerol 3-phosphate = a 1-acyl-sn-glycero-3-phosphate + holo-[ACP]. The protein operates within lipid metabolism; phospholipid metabolism. In terms of biological role, catalyzes the transfer of an acyl group from acyl-ACP to glycerol-3-phosphate (G3P) to form lysophosphatidic acid (LPA). This enzyme can also utilize acyl-CoA as fatty acyl donor, but not acyl-PO(4). The sequence is that of Glycerol-3-phosphate acyltransferase from Escherichia fergusonii (strain ATCC 35469 / DSM 13698 / CCUG 18766 / IAM 14443 / JCM 21226 / LMG 7866 / NBRC 102419 / NCTC 12128 / CDC 0568-73).